The chain runs to 423 residues: MVDNYNNNNILPTNTSTTTTTNTTITPTPPLPPPPPISNILDNNNNNNLIKNDIKNDKVAVSNSNVRPSSSSVSYENSDWNKVYNSEREKLHEVNKQILNIKRPSTSIVRVSQLDSARLDEEILDLLRSQFMKIFTFFKPNFIHNFQPEINLVLKSVIYKLSIFNLGTTYGNQLQNLTYRNEKAFDPIRGSDQLNKLTMRQKWLSGLINIGGEWLWTRINRYLINNNWSEHPPNDIRKKFWNFLNFAESAYKALALLNFLTFLFNGKYVTLVNRILHMRLVYAHPTLSRNISFEYMNRLLVWHGFTEFILFIMPLINIDRIKSFLYRLLVKTSFGNSSGNNNNTASNPLQQLQKQQLLIQQQQMALAKCPICMNDPISMPYSADCGHLFCYYCIKTSCMIDSSFTCPRCNSLISNIKRFSIQD.

Over residues 1–26 (MVDNYNNNNILPTNTSTTTTTNTTIT) the composition is skewed to low complexity. Positions 1–46 (MVDNYNNNNILPTNTSTTTTTNTTITPTPPLPPPPPISNILDNNNN) are disordered. Residues 1–109 (MVDNYNNNNI…NIKRPSTSIV (109 aa)) are Peroxisomal matrix-facing. Positions 27 to 37 (PTPPLPPPPPI) are enriched in pro residues. Residues 110–136 (RVSQLDSARLDEEILDLLRSQFMKIFT) form a helical membrane-spanning segment. The Cytoplasmic portion of the chain corresponds to 137-142 (FFKPNF). The chain crosses the membrane as a helical span at residues 143-168 (IHNFQPEINLVLKSVIYKLSIFNLGT). The Peroxisomal matrix portion of the chain corresponds to 169 to 197 (TYGNQLQNLTYRNEKAFDPIRGSDQLNKL). Residues 198–224 (TMRQKWLSGLINIGGEWLWTRINRYLI) form a helical membrane-spanning segment. Residues 225–234 (NNNWSEHPPN) lie on the Cytoplasmic side of the membrane. Residues 235–265 (DIRKKFWNFLNFAESAYKALALLNFLTFLFN) traverse the membrane as a helical segment. Topologically, residues 266-292 (GKYVTLVNRILHMRLVYAHPTLSRNIS) are peroxisomal matrix. The chain crosses the membrane as a helical span at residues 293-316 (FEYMNRLLVWHGFTEFILFIMPLI). Residues 317–423 (NIDRIKSFLY…SNIKRFSIQD (107 aa)) are Cytoplasmic-facing. 8 residues coordinate Zn(2+): Cys-369, Cys-372, Cys-385, His-387, Cys-390, Cys-393, Cys-406, and Cys-409. The RING-type zinc-finger motif lies at 369–410 (CPICMNDPISMPYSADCGHLFCYYCIKTSCMIDSSFTCPRCN).

The protein belongs to the pex2/pex10/pex12 family. In terms of assembly, component of the PEX2-PEX10-PEX12 retrotranslocation channel.

The protein localises to the peroxisome membrane. The catalysed reaction is [E2 ubiquitin-conjugating enzyme]-S-ubiquitinyl-L-cysteine + [acceptor protein]-L-cysteine = [E2 ubiquitin-conjugating enzyme]-L-cysteine + [acceptor protein]-S-ubiquitinyl-L-cysteine.. It participates in protein modification; protein ubiquitination. Functionally, E3 ubiquitin-protein ligase component of a retrotranslocation channel required for peroxisome organization by mediating export of the PEX5 receptor from peroxisomes to the cytosol, thereby promoting PEX5 recycling. The retrotranslocation channel is composed of PEX2, PEX10 and PEX12; each subunit contributing transmembrane segments that coassemble into an open channel that specifically allows the passage of PEX5 through the peroxisomal membrane. PEX2 also regulates peroxisome organization by acting as a E3 ubiquitin-protein ligase. PEX2 ubiquitinates PEX5 during its passage through the retrotranslocation channel: catalyzes monoubiquitination of PEX5 at 'Cys-11', a modification that acts as a signal for PEX5 extraction into the cytosol. This chain is Peroxisome biogenesis factor 2 (pex2), found in Dictyostelium discoideum (Social amoeba).